We begin with the raw amino-acid sequence, 414 residues long: NADH-dependent flavin oxidoreductase iccE (414 aa).

Residues 25-28 (TAIA) and Gln107 contribute to the FMN site. 188 to 191 (HASH) serves as a coordination point for substrate. 347–348 (AR) lines the FMN pocket.

Belongs to the NADH:flavin oxidoreductase/NADH oxidase family.

It carries out the reaction 8-epi-ilicicolin H = ilicicolin H. It functions in the pathway mycotoxin biosynthesis. Functionally, NADH-dependent flavin oxidoreductase; part of the gene cluster that mediates the biosynthesis of ilicicolin H, a 4-hydroxy-2-pyridonealkaloid that has potent and broad antifungal activities by inhibiting the mitochondrial respiration chain. IccE acts as an epimerase and catalyzes the conversion of 8-epi-ilicicolin H into the final product ilicicolin H. The biosynthesis of ilicicolin H starts with formation of the tetramic acid by the hybrid PKS-NRPS synthetase iccA with the partnering trans-enoyl reductase iccB since iccA lacks a designated enoylreductase (ER) domain. The cytochrome P450 monooxygenase iccC then catalyzes the ring expansion of the tetramate to the acyclic 2-pyridone. The pericyclase iccD further converts the acyclic 2-pyridone into 8-epi-ilicicolin H. Finally, the epimerase iccE converts 8-epi-ilicicolin H into ilicicolin H via epimerization. IccA to iccE are sufficient for ilicicolin H biosynthesis and the roles of the remaining enzymes, iccF, iccG and iccH within the pathway have still to be determined. This chain is NADH-dependent flavin oxidoreductase iccE, found in Talaromyces variabilis (Penicillium variabile).